The primary structure comprises 740 residues: Elongation factor 2 (740 aa).

The tr-type G domain occupies 23–264 (AQIRNAGTLA…MIIEHVPPPN (242 aa)). GTP contacts are provided by residues 32–39 (AHVDHGKT), 98–102 (DTPGH), and 152–155 (NKID). H605 is subject to Diphthamide.

It belongs to the TRAFAC class translation factor GTPase superfamily. Classic translation factor GTPase family. EF-G/EF-2 subfamily.

It is found in the cytoplasm. Catalyzes the GTP-dependent ribosomal translocation step during translation elongation. During this step, the ribosome changes from the pre-translocational (PRE) to the post-translocational (POST) state as the newly formed A-site-bound peptidyl-tRNA and P-site-bound deacylated tRNA move to the P and E sites, respectively. Catalyzes the coordinated movement of the two tRNA molecules, the mRNA and conformational changes in the ribosome. The chain is Elongation factor 2 from Pyrobaculum islandicum (strain DSM 4184 / JCM 9189 / GEO3).